The sequence spans 75 residues: MEQVQQAIDQHLVELEQLFKMLMDVRVALGGVTVVQVNEMRTFVISASAAAQRLRALARRYPAPLAVAAEPMETE.

The polypeptide is Protein B (Dicentrarchus labrax (European seabass)).